The primary structure comprises 678 residues: Probable E3 ubiquitin ligase complex SCF subunit sconB (678 aa).

The interval 1–52 (MSTEDNHDSQILTARHRSDASEQSFKSLFGGPSSEDGKETEPDTHDHNHSFS) is disordered. A compositionally biased stretch (basic and acidic residues) spans 35-49 (EDGKETEPDTHDHNH). An F-box domain is found at 178–224 (IDFITALPPEIAFKILCYLDTTSLCKASQVSRGWRALADDDVVWHRM). Positions 266 to 287 (VVGPRSPDASAESPPSGKRKLE) are disordered. WD repeat units follow at residues 347–375 (GHTNGVMCLQFEDNILATGSYDTTIKIWD), 387–415 (GHESGIRCLQFDDTKLISGSMDRTIKVWN), 427–455 (GHRGGVIGLHFDASILASGSVDKTVKIWN), 466–496 (GHTDWVNAVRVDTSSRTVFSASDDCTVRLWD), 508–543 (GHVGQVQQVVPLPREFEFEEHDAECENDDLSTTSGD), 553–595 (MGLE…RLWE), 607–635 (GHLEGVWALGADTLRIVSGAEDRMIKIWD), and 647–675 (GHSGPVTCIGLGDSRFATGSEDCEVRMYS).

The protein belongs to the WD repeat MET30/SCONB/SCON-2 family. Component of the SCF(sconB) E3 ubiquitin ligase complex.

It functions in the pathway protein modification; protein ubiquitination. In terms of biological role, component of the SCF(sconB) E3 ubiquitin ligase complex involved in the regulation of sulfur metabolite repression, probably by mediating the inactivation or degradation of the metR transcription factor. The sequence is that of Probable E3 ubiquitin ligase complex SCF subunit sconB (sconB) from Emericella nidulans (strain FGSC A4 / ATCC 38163 / CBS 112.46 / NRRL 194 / M139) (Aspergillus nidulans).